The primary structure comprises 1486 residues: Chromosome partition protein MukB (1486 aa).

34-41 (GGNGAGKS) contacts ATP. Coiled coils occupy residues 326 to 418 (LEAD…QYNQ), 444 to 480 (LETFQAKELEATEKMLSLEQKMSMAQTAHSQFEQAYQ), and 509 to 603 (RHLA…RAPV). The flexible hinge stretch occupies residues 666–783 (PGGSEDQRLN…EVPLFGRAAR (118 aa)). Coiled-coil stretches lie at residues 835-923 (EAEI…AKLE), 977-1115 (EMLS…TAKA), and 1209-1266 (VEAI…QNVS).

This sequence belongs to the SMC family. MukB subfamily. In terms of assembly, homodimerization via its hinge domain. Binds to DNA via its C-terminal region. Interacts, and probably forms a ternary complex, with MukE and MukF via its C-terminal region. The complex formation is stimulated by calcium or magnesium. Interacts with tubulin-related protein FtsZ.

The protein localises to the cytoplasm. It localises to the nucleoid. Its function is as follows. Plays a central role in chromosome condensation, segregation and cell cycle progression. Functions as a homodimer, which is essential for chromosome partition. Involved in negative DNA supercoiling in vivo, and by this means organize and compact chromosomes. May achieve or facilitate chromosome segregation by condensation DNA from both sides of a centrally located replisome during cell division. The chain is Chromosome partition protein MukB from Escherichia coli (strain 55989 / EAEC).